Here is a 425-residue protein sequence, read N- to C-terminus: uncharacterized protein (425 aa).

The next 12 membrane-spanning stretches (helical) occupy residues 15-35 (LICA…SQML), 48-68 (LIGA…WAPL), 84-104 (MLLS…FDPL), 107-127 (LGTV…QDIV), 149-169 (INAY…LAAI), 174-194 (TVFL…LFLA), 225-245 (VIQA…DSFA), 271-291 (ALWS…KLGI), 295-315 (LWLF…LAAF), 331-351 (VVIA…VAFM), 370-390 (LSAL…GAVG), and 395-415 (FWFC…VAPL).

To E.coli AmpG and yeast YBR220c.

The protein resides in the cell inner membrane. This is an uncharacterized protein from Haemophilus influenzae (strain ATCC 51907 / DSM 11121 / KW20 / Rd).